A 264-amino-acid polypeptide reads, in one-letter code: Protein-lysine methyltransferase METTL21C (264 aa).

Polar residues predominate over residues 1-10 (MDVCLSSAQQ). The interval 1–46 (MDVCLSSAQQPGRRGEGLSSPGGWLEAEKKGAPQKDSTGGVLEESN) is disordered. Residues Trp92, 120–122 (GAG), Asp141, Trp172, and Ser193 each bind S-adenosyl-L-methionine.

The protein belongs to the methyltransferase superfamily. METTL21 family. Interacts with members of the heat shock protein 70 families; these proteins may possibly be methylation substrates for the enzyme.

It localises to the nucleus. It is found in the cytoplasm. It carries out the reaction L-lysyl-[protein] + S-adenosyl-L-methionine = N(6)-methyl-L-lysyl-[protein] + S-adenosyl-L-homocysteine + H(+). The catalysed reaction is N(6)-methyl-L-lysyl-[protein] + S-adenosyl-L-methionine = N(6),N(6)-dimethyl-L-lysyl-[protein] + S-adenosyl-L-homocysteine + H(+). The enzyme catalyses N(6),N(6)-dimethyl-L-lysyl-[protein] + S-adenosyl-L-methionine = N(6),N(6),N(6)-trimethyl-L-lysyl-[protein] + S-adenosyl-L-homocysteine + H(+). In terms of biological role, protein-lysine N-methyltransferase using S-adenosyl-L-methionine as methyl donor. Mono-di and trimethylates 'Lys-943' of AARS1. This chain is Protein-lysine methyltransferase METTL21C, found in Homo sapiens (Human).